The following is a 146-amino-acid chain: Putative pre-16S rRNA nuclease (146 aa).

It belongs to the YqgF nuclease family.

The protein resides in the cytoplasm. Its function is as follows. Could be a nuclease involved in processing of the 5'-end of pre-16S rRNA. The chain is Putative pre-16S rRNA nuclease from Burkholderia mallei (strain SAVP1).